The sequence spans 377 residues: Naringenin,2-oxoglutarate 3-dioxygenase (377 aa).

Positions 193–297 (CVDMDQKVVV…RLSIATFQNP (105 aa)) constitute a Fe2OG dioxygenase domain. Positions 220, 222, and 278 each coordinate Fe cation. Arg288 provides a ligand contact to 2-oxoglutarate.

The protein belongs to the iron/ascorbate-dependent oxidoreductase family. Fe(2+) serves as cofactor. The cofactor is L-ascorbate.

The enzyme catalyses a (2S)-flavan-4-one + 2-oxoglutarate + O2 = a (2R,3R)-dihydroflavonol + succinate + CO2. It functions in the pathway secondary metabolite biosynthesis; flavonoid biosynthesis. Its function is as follows. Catalyzes the 3-beta-hydroxylation of 2S-flavanones to 2R,3R-dihydroflavonols which are intermediates in the biosynthesis of flavonols, anthocyanidins, catechins and proanthocyanidins in plants. The sequence is that of Naringenin,2-oxoglutarate 3-dioxygenase from Hordeum vulgare (Barley).